Reading from the N-terminus, the 369-residue chain is Developmentally-regulated G-protein 3 (369 aa).

Positions 66–291 (SRVGLVGFPS…LLDKIWEYLD (226 aa)) constitute an OBG-type G domain. GTP-binding positions include 72–79 (GFPSVGKS), 118–122 (DLPGI), and 249–252 (NKID). A TGS domain is found at 291 to 367 (DLTRIYTKPK…EDEDVVQIVK (77 aa)).

This sequence belongs to the TRAFAC class OBG-HflX-like GTPase superfamily. OBG GTPase family.

Binds GDP and GTP, and has low GTPase activity in vitro. This is Developmentally-regulated G-protein 3 (DRG3) from Arabidopsis thaliana (Mouse-ear cress).